Consider the following 538-residue polypeptide: Syncytin-2 (538 aa).

A signal peptide spans 1-15; it reads MGLLLLVLILTPLLA. At 16-478 the chain is on the extracellular side; the sequence is AHRHPDFPLL…GWLNWEGTWK (463 aa). The CXXC motif lies at 43-46; that stretch reads CWLC. 3 cysteine pairs are disulfide-bonded: cysteine 43–cysteine 46, cysteine 43–cysteine 439, and cysteine 431–cysteine 438. N-linked (GlcNAc...) asparagine glycosylation is found at asparagine 133, asparagine 146, asparagine 177, asparagine 220, asparagine 241, asparagine 247, asparagine 312, and asparagine 332. The fusion peptide stretch occupies residues 354–374; that stretch reads FIPLLAGLGIIAGTGTGIAGI. A CKS-17 motif is present at residues 414-430; sequence LQNRRGLDMLTAAQGGI. A CX6CC motif is present at residues 431 to 439; the sequence is CLALDEKCC. Residue asparagine 443 is glycosylated (N-linked (GlcNAc...) asparagine). Residues 479 to 499 form a helical membrane-spanning segment; that stretch reads WFSWVLPFTGPLVSLLLLLLF. The Cytoplasmic segment spans residues 500-538; sequence GPCLLNLITQFVLSRLQAIKLQTNLSAGCRPHNIQESPF.

This sequence belongs to the gamma type-C retroviral envelope protein family. HERV class-I FRD env subfamily. As to quaternary structure, the surface and transmembrane proteins form a heterodimer. They are attached by non-covalent interactions or by a labile interchain disulfide bond. Specific enzymatic cleavages in vivo yield the mature SU and TM proteins. Post-translationally, the CXXC motif is highly conserved across a broad range of retroviral envelope proteins. It is thought to participate in the formation of a labile disulfide bond possibly with the CX6CC motif present in the transmembrane protein.

Its subcellular location is the virion. It localises to the cell membrane. Its function is as follows. This endogenous retroviral envelope protein has retained its original fusogenic properties and participates in trophoblast fusion and the formation of a syncytium during placenta morphogenesis. The interaction with MFSD2A is apparently important for this process. Functionally, endogenous envelope proteins may have kept, lost or modified their original function during evolution but this one can still make pseudotypes with MLV, HIV-1 or SIV-1 virions and confer infectivity. Retroviral envelope proteins mediate receptor recognition and membrane fusion during early infection. The surface protein mediates receptor recognition, while the transmembrane protein anchors the envelope heterodimer to the viral membrane through one transmembrane domain. The other hydrophobic domain, called fusion peptide, mediates fusion of the viral membrane with the target cell membrane. This is Syncytin-2 (ERVFRD-1) from Pongo pygmaeus (Bornean orangutan).